A 146-amino-acid polypeptide reads, in one-letter code: MGTPASVVSEPPLWQVSTAQPRDRGRGRKQASANIFQDAELVQIQGLFQRSGDQLAEERAQIIWECAGDHRVAEALRRLRRKRPPRQNHCSRLRVPELGSTAADPQASTTDTASSEQFGNSRRTSARVHRNWNKPGPTGYLHQIRH.

Disordered regions lie at residues 1–31 (MGTP…RKQA) and 80–146 (RRKR…QIRH). The segment covering 80 to 92 (RRKRPPRQNHCSR) has biased composition (basic residues). Polar residues predominate over residues 106–123 (QASTTDTASSEQFGNSRR).

Its function is as follows. May be involved in MAP kinase activation, epithelial sodium channel (ENaC) down-regulation and cell cycling. The polypeptide is Arginine vasopressin-induced protein 1 (Avpi1) (Rattus norvegicus (Rat)).